We begin with the raw amino-acid sequence, 260 residues long: Homeobox protein Hox-D11b (260 aa).

Positions 1–14 (MFSSSFSYPSKTSP) are enriched in low complexity. 2 disordered regions span residues 1 to 21 (MFSS…PFLA) and 151 to 206 (ITPG…CTRR). A compositionally biased stretch (basic and acidic residues) spans 167–179 (RSPDGESSEERAG). Residues 205 to 260 (RRKKRCPYSKQQIIELEREFLFNIYINKDRRMQLSHLLRLTDRCVNNPLNQDSFFT) constitute a DNA-binding region (homeobox; truncated).

This sequence belongs to the Abd-B homeobox family.

Its subcellular location is the nucleus. Sequence-specific transcription factor which is part of a developmental regulatory system that provides cells with specific positional identities on the anterior-posterior axis. The chain is Homeobox protein Hox-D11b (hoxd11b) from Takifugu rubripes (Japanese pufferfish).